The sequence spans 164 residues: Transcription antitermination protein NusB (164 aa).

Belongs to the NusB family.

Functionally, involved in transcription antitermination. Required for transcription of ribosomal RNA (rRNA) genes. Binds specifically to the boxA antiterminator sequence of the ribosomal RNA (rrn) operons. This chain is Transcription antitermination protein NusB, found in Chlamydia muridarum (strain MoPn / Nigg).